Here is a 339-residue protein sequence, read N- to C-terminus: Mitogen-activated protein kinase kinase kinase 18 (339 aa).

The 261-residue stretch at 3–263 folds into the Protein kinase domain; that stretch reads WTRGKTLGRG…ASQLLNHPFL (261 aa). Residues 9–17 and Lys-32 each bind ATP; that span reads LGRGSTATV. Catalysis depends on Asp-131, which acts as the Proton acceptor. Phosphoserine is present on Ser-301.

Belongs to the protein kinase superfamily. Ser/Thr protein kinase family. As to quaternary structure, interacts with ABI1. Binds to MKK3. Associates with SRK2E within the nucleus. Autophosphorylated. In terms of processing, unstable protein degraded by the proteasome pathway; this degradation is promoted by ABI1, but blocked by ABA. In terms of tissue distribution, expressed in roots, leaves and flowers.

The protein resides in the nucleus. The enzyme catalyses L-seryl-[protein] + ATP = O-phospho-L-seryl-[protein] + ADP + H(+). The catalysed reaction is L-threonyl-[protein] + ATP = O-phospho-L-threonyl-[protein] + ADP + H(+). With respect to regulation, kinase activity is activated by abscisic acid (ABA). Inhibited by ABI1. Activated by SRK2E. Component of the abscisic acid (ABA) signaling pathway that acts as ABA signal transducer in the context of abiotic stresses. Triggers MPK1, MPK2, MPK7 and MPK14 activation in a MKK3-dependent manner and MPK6 activation in a MKK3-independent manner. Mediates the ABA-dependent activation of the MKK3-MPK7 module. Positive regulator of ABA responses leading to the induction of gene expression (e.g. RD29B and RAB18) and involved in various responses including stomatal development, stomatal movement, inhibition of germination and root growth. Promotes leaf senescence. In Arabidopsis thaliana (Mouse-ear cress), this protein is Mitogen-activated protein kinase kinase kinase 18.